Reading from the N-terminus, the 443-residue chain is Chromosomal replication initiator protein DnaA (443 aa).

The segment at 1-76 (METKALWEKL…KSVLNSYVSV (76 aa)) is domain I, interacts with DnaA modulators. Residues 76–99 (VDFLTKEIFEKNTKKENKKEPINT) are domain II. Residues 100-320 (VLSENALTFE…GLVNRLLFFG (221 aa)) form a domain III, AAA+ region region. Glycine 145, glycine 147, lysine 148, and threonine 149 together coordinate ATP. The segment at 321–443 (IQNDLGHIID…ESLKNEIIGK (123 aa)) is domain IV, binds dsDNA.

The protein belongs to the DnaA family. In terms of assembly, oligomerizes as a right-handed, spiral filament on DNA at oriC.

The protein localises to the cytoplasm. Its function is as follows. Plays an essential role in the initiation and regulation of chromosomal replication. ATP-DnaA binds to the origin of replication (oriC) to initiate formation of the DNA replication initiation complex once per cell cycle. Binds the DnaA box (a 9 base pair repeat at the origin) and separates the double-stranded (ds)DNA. Forms a right-handed helical filament on oriC DNA; dsDNA binds to the exterior of the filament while single-stranded (ss)DNA is stabiized in the filament's interior. The ATP-DnaA-oriC complex binds and stabilizes one strand of the AT-rich DNA unwinding element (DUE), permitting loading of DNA polymerase. After initiation quickly degrades to an ADP-DnaA complex that is not apt for DNA replication. Binds acidic phospholipids. In Mesoplasma florum (strain ATCC 33453 / NBRC 100688 / NCTC 11704 / L1) (Acholeplasma florum), this protein is Chromosomal replication initiator protein DnaA.